The chain runs to 248 residues: Probable transcriptional regulatory protein Avi_3631 (248 aa).

It belongs to the TACO1 family.

Its subcellular location is the cytoplasm. The protein is Probable transcriptional regulatory protein Avi_3631 of Allorhizobium ampelinum (strain ATCC BAA-846 / DSM 112012 / S4) (Agrobacterium vitis (strain S4)).